Here is a 909-residue protein sequence, read N- to C-terminus: Phosphoenolpyruvate carboxylase (909 aa).

Active-site residues include H151 and K578.

This sequence belongs to the PEPCase type 1 family. It depends on Mg(2+) as a cofactor.

The enzyme catalyses oxaloacetate + phosphate = phosphoenolpyruvate + hydrogencarbonate. Forms oxaloacetate, a four-carbon dicarboxylic acid source for the tricarboxylic acid cycle. This Caulobacter vibrioides (strain ATCC 19089 / CIP 103742 / CB 15) (Caulobacter crescentus) protein is Phosphoenolpyruvate carboxylase.